Consider the following 79-residue polypeptide: Small ribosomal subunit protein uS17 (79 aa).

Belongs to the universal ribosomal protein uS17 family. As to quaternary structure, part of the 30S ribosomal subunit.

One of the primary rRNA binding proteins, it binds specifically to the 5'-end of 16S ribosomal RNA. In Rhizobium leguminosarum bv. trifolii (strain WSM2304), this protein is Small ribosomal subunit protein uS17.